A 101-amino-acid chain; its full sequence is uncharacterized protein (101 aa).

It localises to the cytoplasm. This is an uncharacterized protein from Saccharomyces cerevisiae (strain ATCC 204508 / S288c) (Baker's yeast).